A 391-amino-acid chain; its full sequence is uncharacterized protein (391 aa).

A run of 12 helical transmembrane segments spans residues 7-27 (FILV…LPVI), 39-59 (AING…SPFM), 66-88 (LGFK…GFIW), 92-111 (VWVW…MLHF), 131-151 (SIYG…VPLV), 156-176 (SLPF…VFFL), 197-217 (FYQA…YGFL), 239-259 (VAII…PLGI), 269-289 (VLLV…VFPS), 292-312 (VIGG…TLGI), 329-349 (LLCG…GGWY), and 356-376 (ANLF…LVLG).

This sequence belongs to the major facilitator superfamily.

It localises to the cell membrane. This is an uncharacterized protein from Bacillus subtilis (strain 168).